A 494-amino-acid polypeptide reads, in one-letter code: GPI alpha-1,6-mannosyltransferase 2 (494 aa).

The Cytoplasmic portion of the chain corresponds to 1–13 (MWSLDPSQKEVLR). A helical membrane pass occupies residues 14–34 (FAVSCRILTLMLQALFNIIIP). The Lumenal portion of the chain corresponds to 35 to 77 (DHHADAFSPPRLASSCSVDQLVEGLLGGLSRWDAEHFLFIAEH). A helical membrane pass occupies residues 78 to 98 (GYLYEHNFAFFPGFPLALLMG). Topologically, residues 99 to 113 (TELLRPLQGLLSQRS) are cytoplasmic. A helical membrane pass occupies residues 114–134 (CLLVSVALLNFLFSVLAAVTL). Residues 135 to 136 (HD) are Lumenal-facing. The helical transmembrane segment at 137–157 (LGCLVLGCPRQAFYAAMLFCL) threads the bilayer. Topologically, residues 158–161 (SPAN) are cytoplasmic. The chain crosses the membrane as a helical span at residues 162–182 (VFLAAGYSEALFAFLTFSAMG). Over 183–192 (QLERGRSWAS) the chain is Lumenal. A helical membrane pass occupies residues 193–213 (GLLFALATGVRSNGLVSVGFL). Over 214-234 (LHAQCRGFFSSLVVLNPLKPL) the chain is Cytoplasmic. A helical transmembrane segment spans residues 235–255 (FKLMASLCLSVLTVSLPFALF). Topologically, residues 256 to 327 (QYYAYTQFCL…RYYELRQVPN (72 aa)) are lumenal. Residues 328-348 (FLLATPVAVLVVWAAWTYVTT) form a helical membrane-spanning segment. Residues 349 to 379 (HPWLCLTLGLRRSKDSKKTLEKPHPGFLSPK) are Cytoplasmic-facing. The helical transmembrane segment at 380–400 (VFVYLVHAAGLLLFGSLCMHV) threads the bilayer. At 401 to 470 (QVLTRLLCSS…NWRACSPVTR (70 aa)) the chain is on the lumenal side. Residues 471–491 (CILGYFLTYWLLGLLLHCNFL) form a helical membrane-spanning segment. Topologically, residues 492–494 (PWT) are cytoplasmic.

It belongs to the PIGV family. Post-translationally, not N-glycosylated.

Its subcellular location is the endoplasmic reticulum membrane. Its pathway is glycolipid biosynthesis; glycosylphosphatidylinositol-anchor biosynthesis. In terms of biological role, alpha-1,6-mannosyltransferase that catalyzes the transfer of the second mannose, via an alpha-1,6 bond, from a dolichol-phosphate-mannose (Dol-P-Man) to the alpha-D-Man-(1-&gt;4)-alpha-D-GlcN-(1-&gt;6)-(1-radyl,2-acyl-sn-glycero-3-phospho)-2-acyl-inositol intermediate to generate an alpha-D-Man-(1-&gt;6)-alpha-D-Man-(1-&gt;4)-alpha-D-GlcN-(1-&gt;6)-(1-radyl,2-acyl-sn-glycero-3-phospho)-2-acyl-inositol and participates in the seventh step of the glycosylphosphatidylinositol-anchor biosynthesis. Also transfers the second mannose on a 2-PEtn-alpha-D-Man-(1-&gt;4)-alpha-D-GlcN-(1-&gt;6)-(1-radyl,2-acyl-sn-glycero-3-phospho)-2-acyl-inositol. This is GPI alpha-1,6-mannosyltransferase 2 from Cricetulus griseus (Chinese hamster).